We begin with the raw amino-acid sequence, 132 residues long: uncharacterized protein (132 aa).

The next 4 membrane-spanning stretches (helical) occupy residues 15–37 (FPEY…LLLY), 49–71 (AFIP…LRLF), 81–103 (VILT…LALV), and 110–129 (LAAT…MAFV).

The protein resides in the cell membrane. This is an uncharacterized protein from Archaeoglobus fulgidus (strain ATCC 49558 / DSM 4304 / JCM 9628 / NBRC 100126 / VC-16).